A 363-amino-acid chain; its full sequence is 3-dehydroquinate synthase (363 aa).

NAD(+) is bound by residues 109–113 (GATTD), 133–134 (TT), Lys-146, and Lys-155. 3 residues coordinate Zn(2+): Glu-188, His-251, and His-267.

The protein belongs to the sugar phosphate cyclases superfamily. Dehydroquinate synthase family. NAD(+) is required as a cofactor. Co(2+) serves as cofactor. Requires Zn(2+) as cofactor.

It is found in the cytoplasm. The catalysed reaction is 7-phospho-2-dehydro-3-deoxy-D-arabino-heptonate = 3-dehydroquinate + phosphate. It functions in the pathway metabolic intermediate biosynthesis; chorismate biosynthesis; chorismate from D-erythrose 4-phosphate and phosphoenolpyruvate: step 2/7. Functionally, catalyzes the conversion of 3-deoxy-D-arabino-heptulosonate 7-phosphate (DAHP) to dehydroquinate (DHQ). The protein is 3-dehydroquinate synthase of Streptomyces avermitilis (strain ATCC 31267 / DSM 46492 / JCM 5070 / NBRC 14893 / NCIMB 12804 / NRRL 8165 / MA-4680).